The chain runs to 483 residues: MQEFTKFPTKTGRRSLSRSISQSSTDSYSSAASYTDSSDDEVSPREKQQTNSKGSSNFCVKNIKQAEFGRREIEIAEQDMSALISLRKRAQGEKPLAGAKIVGCTHITAQTAVLIETLCALGAQCRWSACNIYSTQNEVAAALAEAGVAVFAWKGESEDDFWWCIDRCVNMDGWQANMILDDGGDLTHWVYKKYPNVFKKIRGIVEESVTGVHRLYQLSKAGKLCVPAMNVNDSVTKQKFDNLYCCRESILDGLKRTTDVMFGGKQVVVCGYGEVGKGCCAALKALGAIVYITEIDPICALQACMDGFRVVKLNEVIRQVDVVITCTGNKNVVTREHLDRMKNSCIVCNMGHSNTEIDVTSLRTPELTWERVRSQVDHVIWPDGKRVVLLAEGRLLNLSCSTVPTFVLSITATTQALALIELYNAPEGRYKQDVYLLPKKMDEYVASLHLPSFDAHLTELTDDQAKYLGLNKNGPFKPNYYRY.

The interval 1–56 (MQEFTKFPTKTGRRSLSRSISQSSTDSYSSAASYTDSSDDEVSPREKQQTNSKGSS) is disordered. Positions 17-36 (SRSISQSSTDSYSSAASYTD) are enriched in low complexity. A PEST region spans residues 18–45 (RSISQSSTDSYSSAASYTDSSDDEVSPR). S21 is subject to Phosphoserine; by PKD. 4 positions are modified to phosphoserine: S24, S27, S30, and S37. Residues 91 to 154 (QGEKPLAGAK…EAGVAVFAWK (64 aa)) form an interaction with BCL2L10 region. Substrate is bound by residues T108, D182, E207, K237, and D241. Residues 234–401 (SVTKQKFDNL…EGRLLNLSCS (168 aa)) form an NAD binding region. Residues 271-275 (GYGEV), E294, and N329 each bind NAD(+). S344 is subject to Phosphoserine. 350-352 (MGH) is a binding site for NAD(+). Residues 473-483 (NGPFKPNYYRY) are PDZ-binding.

The protein belongs to the adenosylhomocysteinase family. As to quaternary structure, forms multimers. Forms heteromultimers with AHCYL2 (via the C-terminal region). Interacts (when phosphorylated) with ITPR1 (when not phosphorylated); the interaction suppresses inositol 1,4,5-trisphosphate binding to ITPR1. Interacts with BCL2L10; this strengthens the interaction of AHCYL1 with ITPR1. Interacts with CFTR and SLC26A6; the interactions take place once AHCYL1 is released from ITPR1 and increase CFTR and SLC26A6 activities. Interacts with RRM1; in a phosphorylation- and (dATP)-dependent manner. Interacts (via PEST domain when phosphorylated) with SLC4A4 isoform 1 but not isoform 2; the interaction increases SLC4A4 isoform 1 activity. Interacts (when phosphorylated) with SLC9A3; the interaction is required for SLC9A3 apical location and activity. Interacts (when phosphorylated) with FIP1L1; the interaction is direct and associates AHCYL1 with the CPSF complex and RNA. Interacts with PAPOLA. Interacts with ZCCHC4. Interacts with AHCY. Requires NAD(+) as cofactor. Phosphorylated at Ser/Thr residues between Ser-21 and Thr-25 in the PEST region: required for interaction with dATP-bound RRM1 and ITPR1. Phosphorylation at Ser-21 by PRKD1 and CAMK4 is required for further phosphorylations by CSNK1A1. Phosphorylation is induced by oxidative stress. Probably phosphorylated by CAMK2A; phosphorylation at Ser-21 may be required for interaction with SLC9A3. Dephosphorylated in response to apoptotic stress conditions which causes translocation of both AHCYL1 and BCL2L10 from mitochondria-associated endoplasmic reticulum membranes and promotes apoptosis. Expressed in kidney proximal tubules and outer medulla (at protein level).

Its subcellular location is the endoplasmic reticulum. It is found in the cytoplasm. It localises to the cytosol. The protein resides in the apical cell membrane. The protein localises to the microsome. Its function is as follows. Multifaceted cellular regulator which coordinates several essential cellular functions including regulation of epithelial HCO3(-) and fluid secretion, mRNA processing and DNA replication. Regulates ITPR1 sensitivity to inositol 1,4,5-trisphosphate, competing for the common binding site and acting as endogenous 'pseudoligand' whose inhibitory activity can be modulated by its phosphorylation status. Promotes the formation of contact points between the endoplasmic reticulum (ER) and mitochondria, facilitating transfer of Ca(2+) from the ER to mitochondria. Under normal cellular conditions, functions cooperatively with BCL2L10 to limit ITPR1-mediated Ca(2+) release but, under apoptotic stress conditions, dephosphorylated which promotes dissociation of both AHCYL1 and BCL2L10 from mitochondria-associated endoplasmic reticulum membranes, inhibits BCL2L10 interaction with ITPR1 and leads to increased Ca(2+) transfer to mitochondria which promotes apoptosis. In the pancreatic and salivary ducts, at resting state, attenuates inositol 1,4,5-trisphosphate-induced calcium release by interacting with ITPR1. When extracellular stimuli induce ITPR1 phosphorylation or inositol 1,4,5-trisphosphate production, dissociates from ITPR1 to interact with CFTR and SLC26A6, mediating their synergistic activation by calcium and cAMP that stimulates the epithelial secretion of electrolytes and fluid. Also activates basolateral SLC4A4 isoform 1 to coordinate fluid and HCO3(-) secretion. Inhibits the effect of STK39 on SLC4A4 and CFTR by recruiting PP1 phosphatase which activates SLC4A4, SLC26A6 and CFTR through dephosphorylation. Mediates the induction of SLC9A3 surface expression produced by Angiotensin-2. Depending on the cell type, activates SLC9A3 in response to calcium or reverses SLC9A3R2-dependent calcium inhibition. May modulate the polyadenylation state of specific mRNAs, both by controlling the subcellular location of FIP1L1 and by inhibiting PAPOLA activity, in response to a stimulus that alters its phosphorylation state. Acts as a (dATP)-dependent inhibitor of ribonucleotide reductase large subunit RRM1, controlling the endogenous dNTP pool and ensuring normal cell cycle progression. In vitro does not exhibit any S-adenosyl-L-homocysteine hydrolase activity. The protein is S-adenosylhomocysteine hydrolase-like protein 1 of Rattus norvegicus (Rat).